Here is a 193-residue protein sequence, read N- to C-terminus: Riboflavin kinase (193 aa).

The H-T-H motif-like stretch occupies residues 1-59 (MGISQQAASQHLRELEDEGLITRNAEGKGISVMVTDKGRHELLRVYNILHDSLHSRPDH). The interval 60–193 (VEITGTLVSG…TIRIPLEQED (134 aa)) is riboflavin kinase. CDP is bound at residue 69–74 (GMNEGA). Mg(2+) is bound by residues threonine 98 and asparagine 100. 2 residues coordinate FMN: threonine 156 and glutamate 164. 169 to 172 (LDIR) contacts CDP.

The protein belongs to the archaeal riboflavin kinase family. Mg(2+) serves as cofactor.

It carries out the reaction riboflavin + CTP = CDP + FMN + H(+). It functions in the pathway cofactor biosynthesis; FMN biosynthesis; FMN from riboflavin (CTP route): step 1/1. Functionally, catalyzes the CTP-dependent phosphorylation of riboflavin (vitamin B2) to form flavin mononucleotide (FMN). This chain is Riboflavin kinase (ribK), found in Cenarchaeum symbiosum (strain A).